We begin with the raw amino-acid sequence, 100 residues long: Urease subunit gamma (100 aa).

Belongs to the urease gamma subunit family. Heterotrimer of UreA (gamma), UreB (beta) and UreC (alpha) subunits. Three heterotrimers associate to form the active enzyme.

Its subcellular location is the cytoplasm. It carries out the reaction urea + 2 H2O + H(+) = hydrogencarbonate + 2 NH4(+). It functions in the pathway nitrogen metabolism; urea degradation; CO(2) and NH(3) from urea (urease route): step 1/1. This is Urease subunit gamma from Flavobacterium johnsoniae (strain ATCC 17061 / DSM 2064 / JCM 8514 / BCRC 14874 / CCUG 350202 / NBRC 14942 / NCIMB 11054 / UW101) (Cytophaga johnsonae).